The chain runs to 173 residues: dCTP deaminase, dUMP-forming (173 aa).

Residues 93–98 (RSSIGR), aspartate 111, 119–121 (TLE), glutamine 138, and tyrosine 151 each bind dCTP. Glutamate 121 functions as the Proton donor/acceptor in the catalytic mechanism.

This sequence belongs to the dCTP deaminase family. In terms of assembly, homotrimer.

The catalysed reaction is dCTP + 2 H2O = dUMP + NH4(+) + diphosphate. It participates in pyrimidine metabolism; dUMP biosynthesis; dUMP from dCTP: step 1/1. In terms of biological role, bifunctional enzyme that catalyzes both the deamination of dCTP to dUTP and the hydrolysis of dUTP to dUMP without releasing the toxic dUTP intermediate. This chain is dCTP deaminase, dUMP-forming, found in Cytophaga hutchinsonii (strain ATCC 33406 / DSM 1761 / CIP 103989 / NBRC 15051 / NCIMB 9469 / D465).